The primary structure comprises 1496 residues: Synaptojanin-2 (1496 aa).

The SAC domain occupies 120-444 (LKKILSSGVF…GHGLSKVFTG (325 aa)). The region spanning 906–985 (DATVIVNLQS…RAVKIRPKTK (80 aa)) is the RRM domain. Disordered regions lie at residues 1047-1083 (VVSD…HPTY), 1100-1149 (GNFR…GTHG), 1205-1357 (VPES…LQVL), 1393-1413 (SSAI…AASF), 1442-1461 (EPLD…SAQV), and 1468-1496 (RGLP…TLGV). Residues 1063–1074 (SASTPASKSPAL) show a composition bias toward low complexity. A compositionally biased stretch (pro residues) spans 1116-1130 (RPRPPHPPQRPPPPT). Position 1139 is a phosphoserine (S1139). The segment covering 1139 to 1149 (SDASISSGTHG) has biased composition (polar residues). Pro residues-rich tracts occupy residues 1230 to 1239 (PVLPRRPVPR) and 1279 to 1292 (TPPP…PVPK). Residues 1324–1338 (ELSSPEAPEAPSLAP) show a composition bias toward low complexity. Composition is skewed to basic and acidic residues over residues 1470–1480 (LPPDHGGKDFS) and 1487–1496 (NKDKRTTLGV).

Belongs to the synaptojanin family. The protein in the central section; belongs to the inositol 1,4,5-trisphosphate 5-phosphatase family. As to quaternary structure, binds to GRB2. Isoform 2A binds to SYNJ2BP/OMP25. In terms of tissue distribution, widely expressed. Isoforms 2B1 and 2B2 are concentrated at nerve terminals in brain and at spermatid manchette in testis.

Its subcellular location is the cytoplasm. The protein resides in the cell membrane. It is found in the presynapse. The protein localises to the cytoskeleton. It localises to the membrane raft. Its subcellular location is the mitochondrion. It catalyses the reaction a 1,2-diacyl-sn-glycero-3-phospho-(1D-myo-inositol-4,5-bisphosphate) + H2O = a 1,2-diacyl-sn-glycero-3-phospho-(1D-myo-inositol 4-phosphate) + phosphate. In terms of biological role, inositol 5-phosphatase which may be involved in distinct membrane trafficking and signal transduction pathways. May mediate the inhibitory effect of Rac1 on endocytosis. The protein is Synaptojanin-2 (Synj2) of Rattus norvegicus (Rat).